Here is a 336-residue protein sequence, read N- to C-terminus: Glycerol-3-phosphate dehydrogenase [NAD(P)+] (336 aa).

Residues S13, W14, R34, and K108 each coordinate NADPH. The sn-glycerol 3-phosphate site is built by K108, G138, and S140. Residue A142 coordinates NADPH. Residues K193, D246, S256, R257, and N258 each contribute to the sn-glycerol 3-phosphate site. The active-site Proton acceptor is K193. R257 is an NADPH binding site. NADPH-binding residues include V281 and E283.

Belongs to the NAD-dependent glycerol-3-phosphate dehydrogenase family.

It is found in the cytoplasm. The catalysed reaction is sn-glycerol 3-phosphate + NAD(+) = dihydroxyacetone phosphate + NADH + H(+). It catalyses the reaction sn-glycerol 3-phosphate + NADP(+) = dihydroxyacetone phosphate + NADPH + H(+). It functions in the pathway membrane lipid metabolism; glycerophospholipid metabolism. Its function is as follows. Catalyzes the reduction of the glycolytic intermediate dihydroxyacetone phosphate (DHAP) to sn-glycerol 3-phosphate (G3P), the key precursor for phospholipid synthesis. This chain is Glycerol-3-phosphate dehydrogenase [NAD(P)+], found in Carboxydothermus hydrogenoformans (strain ATCC BAA-161 / DSM 6008 / Z-2901).